We begin with the raw amino-acid sequence, 310 residues long: Lipoyl synthase (310 aa).

Positions 45, 50, 56, 71, 75, 78, and 285 each coordinate [4Fe-4S] cluster. Residues 57 to 274 (WTKKHATVMI…GSIARAKGFL (218 aa)) form the Radical SAM core domain.

Belongs to the radical SAM superfamily. Lipoyl synthase family. [4Fe-4S] cluster serves as cofactor.

It localises to the cytoplasm. It catalyses the reaction [[Fe-S] cluster scaffold protein carrying a second [4Fe-4S](2+) cluster] + N(6)-octanoyl-L-lysyl-[protein] + 2 oxidized [2Fe-2S]-[ferredoxin] + 2 S-adenosyl-L-methionine + 4 H(+) = [[Fe-S] cluster scaffold protein] + N(6)-[(R)-dihydrolipoyl]-L-lysyl-[protein] + 4 Fe(3+) + 2 hydrogen sulfide + 2 5'-deoxyadenosine + 2 L-methionine + 2 reduced [2Fe-2S]-[ferredoxin]. Its pathway is protein modification; protein lipoylation via endogenous pathway; protein N(6)-(lipoyl)lysine from octanoyl-[acyl-carrier-protein]: step 2/2. Catalyzes the radical-mediated insertion of two sulfur atoms into the C-6 and C-8 positions of the octanoyl moiety bound to the lipoyl domains of lipoate-dependent enzymes, thereby converting the octanoylated domains into lipoylated derivatives. The sequence is that of Lipoyl synthase from Novosphingobium aromaticivorans (strain ATCC 700278 / DSM 12444 / CCUG 56034 / CIP 105152 / NBRC 16084 / F199).